The primary structure comprises 308 residues: FGLLLGICLIVQIVTGLLLAAHYTADTSLAFASVAHMCRNVQFGWLIRNLHANGASFFFICIYLHIGRGLYYGSYLNKETWNIGVILLLTLMATAFVGYVLPWGQMSFWGATVITNLFSAIPYIGQTLVEWAWGGFSVDNPTLTRFFALHFLLPFVIAGLTLVHLTFLHETGSNNPLGIPSDCDKIPFHPYYSTKDMLGFALMLIPLITLALFSPNLLGDPENFTPANPLATPPHIKPEWYFLFAYAILRSIPNKLGGVLALAASVLVLFLIPLLHTSKARSMTFRPLSQILFWTLVANLLVLTWVGS.

4 consecutive transmembrane segments (helical) span residues 1–21, 45–66, 81–101, and 146–166; these read FGLL…LLAA, WLIR…YLHI, WNIG…GYVL, and FFAL…VHLT. Residues His51 and His65 each coordinate heme b. Residues His150 and His164 each contribute to the heme b site. Residue His169 participates in a ubiquinone binding. Transmembrane regions (helical) follow at residues 194–214, 256–276, and 288–308; these read TKDM…ALFS, LGGV…PLLH, and LSQI…WVGS.

This sequence belongs to the cytochrome b family. In terms of assembly, the cytochrome bc1 complex contains 11 subunits: 3 respiratory subunits (MT-CYB, CYC1 and UQCRFS1), 2 core proteins (UQCRC1 and UQCRC2) and 6 low-molecular weight proteins (UQCRH/QCR6, UQCRB/QCR7, UQCRQ/QCR8, UQCR10/QCR9, UQCR11/QCR10 and a cleavage product of UQCRFS1). This cytochrome bc1 complex then forms a dimer. Heme b is required as a cofactor.

Its subcellular location is the mitochondrion inner membrane. Functionally, component of the ubiquinol-cytochrome c reductase complex (complex III or cytochrome b-c1 complex) that is part of the mitochondrial respiratory chain. The b-c1 complex mediates electron transfer from ubiquinol to cytochrome c. Contributes to the generation of a proton gradient across the mitochondrial membrane that is then used for ATP synthesis. The chain is Cytochrome b (MT-CYB) from Pomatostomus temporalis (Grey-crowned babbler).